The sequence spans 1008 residues: Envelopment polyprotein (1008 aa).

Positions 1–17 (MVRTYLLLLLLCGPATP) are cleaved as a signal peptide. At 18–394 (FFNHLMDVTR…NWANIHCFSK (377 aa)) the chain is on the lumenal side. N-linked (GlcNAc...) asparagine; by host glycans are attached at residues Asn-34, Asn-70, and Asn-108. Disulfide bonds link Cys-138-Cys-269, Cys-156-Cys-166, Cys-206-Cys-247, Cys-216-Cys-226, Cys-233-Cys-238, Cys-292-Cys-295, Cys-299-Cys-368, and Cys-319-Cys-324. N-linked (GlcNAc...) asparagine; by host glycosylation occurs at Asn-208. Residues 395 to 415 (EQVLILVAVSSLCILLLASVL) form a helical membrane-spanning segment. The Cytoplasmic portion of the chain corresponds to 416 to 496 (RALKVIATFT…VRQKMFNLTR (81 aa)). The segment at 419-465 (KVIATFTWKIIKPFWWILSLLCRTCSKRLNKRAERLKESIHSLEEGL) is golgi retention signal. Positions 461-465 (LEEGL) are important for correct targeting of the glycoproteins to the Golgi complex but not for heterodimerization. The interval 497-513 (LSPVVVGMLCLACPVES) is internal signal sequence for glycoprotein C. 12 disulfide bridges follow: Cys-514/Cys-555, Cys-527/Cys-537, Cys-580/Cys-677, Cys-595/Cys-789, Cys-601/Cys-650, Cys-607/Cys-657, Cys-612/Cys-639, Cys-643/Cys-648, Cys-728/Cys-742, Cys-758/Cys-771, Cys-851/Cys-924, and Cys-861/Cys-864. Residues 514 to 977 (CSDSISVTAS…GWFKASWLRA (464 aa)) lie on the Lumenal side of the membrane. The segment at 601-607 (CHLMGAC) is fusion loop. The segment at 644 to 655 (GGALCQCFNMRP) is fusion loop. N-linked (GlcNAc...) asparagine; by host glycosylation is found at Asn-691 and Asn-696. 2 N-linked (GlcNAc...) asparagine; by host glycosylation sites follow: Asn-912 and Asn-949. Residues 978–998 (IWAILGGTVSLIIGVVIIYMV) traverse the membrane as a helical segment. Over 999–1008 (FTLCLKVKKS) the chain is Cytoplasmic.

Belongs to the phlebovirus envelope glycoprotein family. As to quaternary structure, homodimer. Heterodimer with glycoprotein C. Homotrimer (postfusion). In terms of assembly, heterodimer with glycoprotein N. Homotrimer (postfusion). Specific enzymatic cleavages in vivo yield mature proteins including glycoprotein C and glycoprotein N. In terms of processing, the cytoplasmic tail is Palmitoylated. Post-translationally, glycosylated. Contains principally poly-N-acetyllactosamine glycans. Glycosylated. Contains principally oligomannose-type glycans that can attach to host CD209/DC-SIGN. In terms of processing, palmitoylated.

Its subcellular location is the virion membrane. It localises to the host Golgi apparatus membrane. It is found in the host endoplasmic reticulum membrane. In terms of biological role, structural component of the virion that interacts with glycoprotein C. It shields the hydrophobic fusion loops of the glycoprotein C, preventing premature fusion. The glycoprotein protrusions are arranged on an icosahedral lattice, with T=12 triangulation. They are able to attach the virion to the host cell receptor CD209/DC-SIGN and to promote fusion of membranes with the late endosome after endocytosis of the virion. Plays a role in the packaging of ribonucleoproteins during virus assembly. Functionally, structural component of the virion that interacts with glycoprotein N. Acts as a class II fusion protein that is activated upon acidification and subsequent repositioning of the glycoprotein N. The glycoprotein protrusions are arranged on an icosahedral lattice, with T=12 triangulation. They are able to attach the virion to the host cell receptor CD209/DC-SIGN and to promote fusion of membranes with the late endosome after endocytosis of the virion. The sequence is that of Envelopment polyprotein (GP) from Homo sapiens (Human).